A 383-amino-acid polypeptide reads, in one-letter code: Alanine racemase (383 aa).

Catalysis depends on Lys-50, which acts as the Proton acceptor; specific for D-alanine. The residue at position 50 (Lys-50) is an N6-(pyridoxal phosphate)lysine. A substrate-binding site is contributed by Arg-151. Residue Tyr-279 is the Proton acceptor; specific for L-alanine of the active site. Position 327 (Met-327) interacts with substrate.

It belongs to the alanine racemase family. It depends on pyridoxal 5'-phosphate as a cofactor.

It catalyses the reaction L-alanine = D-alanine. Its pathway is amino-acid biosynthesis; D-alanine biosynthesis; D-alanine from L-alanine: step 1/1. In terms of biological role, catalyzes the interconversion of L-alanine and D-alanine. May also act on other amino acids. The sequence is that of Alanine racemase (alr) from Chlorobaculum tepidum (strain ATCC 49652 / DSM 12025 / NBRC 103806 / TLS) (Chlorobium tepidum).